The sequence spans 307 residues: GTPase Era (307 aa).

Residues 14–184 (HSGFVAIVGK…REQILDILPE (171 aa)) enclose the Era-type G domain. Residues 22-29 (GKPNVGKS) are G1. A GTP-binding site is contributed by 22-29 (GKPNVGKS). Residues 48 to 52 (QTTRR) are G2. A G3 region spans residues 69–72 (DTPG). GTP-binding positions include 69–73 (DTPGL) and 131–134 (NKTD). The interval 131–134 (NKTD) is G4. A G5 region spans residues 162 to 164 (LSA). A KH type-2 domain is found at 215–292 (LREELPYAVA…FLGLEVIVIP (78 aa)).

Belongs to the TRAFAC class TrmE-Era-EngA-EngB-Septin-like GTPase superfamily. Era GTPase family. In terms of assembly, monomer.

It localises to the cytoplasm. The protein resides in the cell membrane. An essential GTPase that binds both GDP and GTP, with rapid nucleotide exchange. Plays a role in 16S rRNA processing and 30S ribosomal subunit biogenesis and possibly also in cell cycle regulation and energy metabolism. In Deinococcus deserti (strain DSM 17065 / CIP 109153 / LMG 22923 / VCD115), this protein is GTPase Era.